The following is a 610-amino-acid chain: Myoneurin (610 aa).

In terms of domain architecture, BTB spans 24-89; it reads CDCTIVIGEF…IYTGTLNLDS (66 aa). The disordered stretch occupies residues 169-197; the sequence is QGALAKKSSQTKKKKKAFNSPKTGQNKTV. 2 short sequence motifs (nuclear localization signal) span residues 174-190 and 257-262; these read KKSS…NSPK and KRKRGK. Polar residues predominate over residues 188–197; that stretch reads SPKTGQNKTV. Serine 289 is modified (phosphoserine). 8 consecutive C2H2-type zinc fingers follow at residues 302–324, 330–352, 358–381, 387–409, 415–437, 443–465, 471–493, and 499–522; these read PMCN…MRIH, YVCH…VRTH, YKCE…RMHH, YKCD…ARKH, YVCD…VRRH, YVCD…SRKH, YICG…FRSH, and FICE…TKVH. A disordered region spans residues 521–556; sequence VHSGADKTLDSSAEDHTLSEQDSIQKSPLSETMDVK. Over residues 523 to 539 the composition is skewed to basic and acidic residues; sequence SGADKTLDSSAEDHTLS. The span at 540-550 shows a compositional bias: polar residues; sequence EQDSIQKSPLS.

It belongs to the krueppel C2H2-type zinc-finger protein family. In terms of tissue distribution, mainly expressed in the neuromuscular system. Located in and around synaptic myonuclei in adult muscle. Expression is dysregulated after nerve injury. Also found in the testis, ovary and placenta.

Its subcellular location is the nucleus. The protein is Myoneurin (MYNN) of Homo sapiens (Human).